The sequence spans 237 residues: E3 ubiquitin-protein ligase RNF166 (237 aa).

An RING-type zinc finger spans residues 33 to 73 (CPICLEVYHRPVAIGSCGHTFCGECLQPCLQVPSPLCPLCR). Residues Cys-98, Cys-101, His-113, and Cys-117 each contribute to the Zn(2+) site. A C2HC RNF-type zinc finger spans residues 98 to 117 (CRGCNKKVTLAKMRAHISSC). In terms of domain architecture, UIM spans 221–237 (DEEAAFQAALALSLSEN).

It is found in the cytoplasm. It catalyses the reaction S-ubiquitinyl-[E2 ubiquitin-conjugating enzyme]-L-cysteine + [acceptor protein]-L-lysine = [E2 ubiquitin-conjugating enzyme]-L-cysteine + N(6)-ubiquitinyl-[acceptor protein]-L-lysine.. It functions in the pathway protein modification; protein ubiquitination. Functionally, E3 ubiquitin-protein ligase that promotes the ubiquitination of different substrates. In turn, participates in different biological processes including interferon production or autophagy. Plays a role in the activation of RNA virus-induced interferon-beta production by promoting the ubiquitination of TRAF3 and TRAF6. Also plays a role in the early recruitment of autophagy adapters to bacteria. Mediates 'Lys-29' and 'Lys-33'-linked ubiquitination of SQSTM1 leading to xenophagic targeting of bacteria and inhibition of their replication. This chain is E3 ubiquitin-protein ligase RNF166 (Rnf166), found in Mus musculus (Mouse).